Here is a 250-residue protein sequence, read N- to C-terminus: Leucyl/phenylalanyl-tRNA--protein transferase (250 aa).

The tract at residues 1–21 (MTPFRRPTVLGTSASAPFPPA) is disordered.

Belongs to the L/F-transferase family.

It localises to the cytoplasm. It catalyses the reaction N-terminal L-lysyl-[protein] + L-leucyl-tRNA(Leu) = N-terminal L-leucyl-L-lysyl-[protein] + tRNA(Leu) + H(+). It carries out the reaction N-terminal L-arginyl-[protein] + L-leucyl-tRNA(Leu) = N-terminal L-leucyl-L-arginyl-[protein] + tRNA(Leu) + H(+). The catalysed reaction is L-phenylalanyl-tRNA(Phe) + an N-terminal L-alpha-aminoacyl-[protein] = an N-terminal L-phenylalanyl-L-alpha-aminoacyl-[protein] + tRNA(Phe). Functions in the N-end rule pathway of protein degradation where it conjugates Leu, Phe and, less efficiently, Met from aminoacyl-tRNAs to the N-termini of proteins containing an N-terminal arginine or lysine. The sequence is that of Leucyl/phenylalanyl-tRNA--protein transferase from Xanthomonas euvesicatoria pv. vesicatoria (strain 85-10) (Xanthomonas campestris pv. vesicatoria).